Consider the following 1195-residue polypeptide: Protein PIP82 (1195 aa).

Positions 1–10 are enriched in low complexity; it reads MSHQEQQFQH. Disordered regions lie at residues 1–55, 85–132, 291–471, 493–515, 544–567, 613–637, 702–771, 833–977, and 1060–1195; these read MSHQ…IGSS, KLRG…SQQF, NTFD…TANL, KVAK…GASG, QRNA…GHEP, EEDN…GIAT, MSPV…IVPK, SAGS…VKTS, and QITV…VVEI. Residues 11–26 show a composition bias toward basic residues; that stretch reads YPHHQHHHHHHHHHIH. A compositionally biased stretch (basic and acidic residues) spans 37 to 50; that stretch reads RSSDLEPNRSRNTD. Residues 109-118 are compositionally biased toward low complexity; it reads GSAKDGAGAA. Residues 119–132 are compositionally biased toward polar residues; sequence QQTHLQVAGQSQQF. A compositionally biased stretch (basic and acidic residues) spans 300-313; sequence HEQFERGKISHETD. Low complexity predominate over residues 351 to 360; it reads QQAAAEESPQ. Residues 361–371 are compositionally biased toward pro residues; it reads ANPPPPPPPRP. Positions 400-450 are phospho-regulated basic and hydrophobic (PRBH) motif; the sequence is ETTKTAENADENNASRKLSIRQNIKRLRKSIKRPSKIKSKAAAPVPDSDEE. Over residues 422–438 the composition is skewed to basic residues; that stretch reads NIKRLRKSIKRPSKIKS. Basic and acidic residues predominate over residues 494–505; it reads VAKEPEELETKA. The span at 545–560 shows a compositional bias: polar residues; sequence RNANNQNATTSKQPKP. 2 stretches are compositionally biased toward polar residues: residues 732–742 and 856–867; these read SGPQKSMSYSP and RVQSPQIGNSRE. The segment covering 872–891 has biased composition (acidic residues); that stretch reads QEEEDKEAERDSEEEEEERD. Composition is skewed to pro residues over residues 898 to 910 and 925 to 939; these read SESP…PQRR and VPPP…PPPS. Positions 940-968 are enriched in low complexity; the sequence is VETIPSVASLPSPAPVTRSMAQRSASMSR. The span at 1075 to 1085 shows a compositional bias: polar residues; sequence QSDQSDQSAHQ. Residues 1086 to 1095 show a composition bias toward basic and acidic residues; the sequence is EITDTRKTKS. Over residues 1102–1111 the composition is skewed to polar residues; it reads RQNSNCSRSE. Low complexity-rich tracts occupy residues 1114-1149 and 1179-1195; these read SPLS…QNPS and SYYS…VVEI.

Phosphorylated by aPKC which lowers lipid affinity and promotes dissociation from the cell cortex. In the photoreceptor cells, aPKC-mediated phosphorylation leads to its displacement from the stalk apical cortex and thus restricts its localization to the rhabdomeric apical cortex where it functions. Dephosphorylation appears to be light-dependent. As to expression, restricted to photoreceptor cells (at protein level). Not detected until approximately 48hrs after puparium formation (APF) and then maintained in the photoreceptor cells post-eclosion (at protein level).

Its subcellular location is the cytoplasm. The protein localises to the cell cortex. It is found in the cytosol. It localises to the cell projection. The protein resides in the rhabdomere. Required for the morphological differentiation and maintenance of the rhabdomeric photoreceptor apical domain. Acts as a downstream component of the gl and Pph13 transcriptional pathway which is required for photoreceptor cell development. Likely to function by regulating the trafficking or retention of rhabdomeric proteins including the phototransduction proteins ninaE and didum. The chain is Protein PIP82 from Drosophila melanogaster (Fruit fly).